Here is a 315-residue protein sequence, read N- to C-terminus: Thioredoxin reductase (315 aa).

45–52 (EGSTPGGK) lines the FAD pocket. A disulfide bridge connects residues Cys-145 and Cys-148. 288–297 (DCRSKHFRQI) is a binding site for FAD.

It belongs to the class-II pyridine nucleotide-disulfide oxidoreductase family. As to quaternary structure, homodimer. FAD is required as a cofactor.

It is found in the cytoplasm. The catalysed reaction is [thioredoxin]-dithiol + NADP(+) = [thioredoxin]-disulfide + NADPH + H(+). The protein is Thioredoxin reductase (trxB) of Mycoplasma pneumoniae (strain ATCC 29342 / M129 / Subtype 1) (Mycoplasmoides pneumoniae).